The primary structure comprises 304 residues: GTPase Era (304 aa).

Positions 11–179 (YCGFIAIVGR…QKIVRKSLRE (169 aa)) constitute an Era-type G domain. The G1 stretch occupies residues 19–26 (GRPNVGKS). Residue 19-26 (GRPNVGKS) coordinates GTP. Residues 45–49 (QTTRH) form a G2 region. Residues 66–69 (DTPG) are G3. Residues 66–70 (DTPGL) and 128–131 (NKVD) each bind GTP. Positions 128 to 131 (NKVD) are G4. A G5 region spans residues 158–160 (ISA). The KH type-2 domain occupies 210-287 (TGEELPYSVT…HLELWVKVKA (78 aa)).

Belongs to the TRAFAC class TrmE-Era-EngA-EngB-Septin-like GTPase superfamily. Era GTPase family. Monomer.

The protein localises to the cytoplasm. Its subcellular location is the cell inner membrane. In terms of biological role, an essential GTPase that binds both GDP and GTP, with rapid nucleotide exchange. Plays a role in 16S rRNA processing and 30S ribosomal subunit biogenesis and possibly also in cell cycle regulation and energy metabolism. The protein is GTPase Era of Actinobacillus pleuropneumoniae serotype 5b (strain L20).